A 304-amino-acid chain; its full sequence is Putative S-adenosyl-L-methionine-dependent methyltransferase MUL_0816 (304 aa).

Residues D130 and 159 to 160 (DL) each bind S-adenosyl-L-methionine.

The protein belongs to the UPF0677 family.

Exhibits S-adenosyl-L-methionine-dependent methyltransferase activity. This is Putative S-adenosyl-L-methionine-dependent methyltransferase MUL_0816 from Mycobacterium ulcerans (strain Agy99).